We begin with the raw amino-acid sequence, 528 residues long: MGKNLLKKERDPSILILDFGSQYSELIARRIREANVFSLVVSNFISTKEIQDINPQGIILSGGPNSVYEDNAPKCDQNIFNLGIPVLGICYGMQLMVKELGGTVTPANNRSEYGRAPIKIDFESDLLSSVKDKSIMWMSHGDSINHLPNGFIKIAHTENTLHAAISNKEKKLFGVQFHPEVIHSEYGMTVIKNFVYSISKCKADWNTETFLEETIPRIKEQVGDKKVLLALSGGVDSSTLAFLLNKAIGKQLTCMFIDQGFMRKGEPEFLMEFFAKKFHIKVEYINARERFLHKLNGVTDPEEKRKIIGGEFIRVFEEESHRLGPFEYLAQGTLYPDVIESAGTNLDPKTGERIAVKIKSHHNVGGLPKDLQFKLVEPLRKLFKDEVRKLGNALGLPDEIIKRHPFPGPGLAIRILGEVSIEKLNCLRDADWIVRDEIKKAGLYNDIWQAFAVLLPVKTVGVMGDKRTYAWPVVLRCVSSEDGMTADWSRIPYETLERISNRIVNEVAQVNRVVFDITSKPPGTIEWE.

The Glutamine amidotransferase type-1 domain occupies 13–204 (SILILDFGSQ…VYSISKCKAD (192 aa)). Cys-90 (nucleophile) is an active-site residue. Catalysis depends on residues His-178 and Glu-180. A GMPS ATP-PPase domain is found at 205 to 403 (WNTETFLEET…LGLPDEIIKR (199 aa)). 232 to 238 (SGGVDSS) is a binding site for ATP.

Homodimer.

It carries out the reaction XMP + L-glutamine + ATP + H2O = GMP + L-glutamate + AMP + diphosphate + 2 H(+). It functions in the pathway purine metabolism; GMP biosynthesis; GMP from XMP (L-Gln route): step 1/1. Its function is as follows. Catalyzes the synthesis of GMP from XMP. The polypeptide is GMP synthase [glutamine-hydrolyzing] (Prochlorococcus marinus (strain MIT 9515)).